A 186-amino-acid polypeptide reads, in one-letter code: Dihydrofolate reductase (186 aa).

The 181-residue stretch at 3–183 folds into the DHFR domain; sequence KFSLIVAVCA…IQYQYRIYEK (181 aa). NADP(+) is bound by residues alanine 9 and 15–21; that span reads GIGIKGD. 29-34 contributes to the substrate binding site; the sequence is ELKYFS. NADP(+) is bound at residue 53 to 55; that stretch reads RKT. A substrate-binding site is contributed by arginine 69. NADP(+) is bound by residues 75–77 and 116–123; these read TRD and GGNAVYKE.

The protein belongs to the dihydrofolate reductase family.

It catalyses the reaction (6S)-5,6,7,8-tetrahydrofolate + NADP(+) = 7,8-dihydrofolate + NADPH + H(+). It functions in the pathway cofactor biosynthesis; tetrahydrofolate biosynthesis; 5,6,7,8-tetrahydrofolate from 7,8-dihydrofolate: step 1/1. Functionally, key enzyme in folate metabolism. Catalyzes an essential reaction for de novo glycine and purine synthesis, and for DNA precursor synthesis. The sequence is that of Dihydrofolate reductase (DHFR) from Aedes albopictus (Asian tiger mosquito).